The chain runs to 125 residues: Secreted RxLR effector protein RXLR-C13 (125 aa).

A signal peptide spans 1–23 (MVNSLTFTLVVVCLVRSCDGVAA). Residues 43–73 (RVLQETATANDDVKKLSTSTKVDSKLNQEIK) carry the RxLR-dEER motif. The N-linked (GlcNAc...) asparagine glycan is linked to N85. A helical membrane pass occupies residues 106-123 (FFILATILLFPIAAYMVA).

This sequence belongs to the RxLR effector family.

It localises to the secreted. The protein resides in the host endoplasmic reticulum membrane. In terms of biological role, secreted effector that does not suppress pattern-triggered immunity (PTI) in plant host. The sequence is that of Secreted RxLR effector protein RXLR-C13 from Plasmopara halstedii (Downy mildew of sunflower).